Here is a 559-residue protein sequence, read N- to C-terminus: Glucans biosynthesis protein G (559 aa).

The signal sequence occupies residues 1 to 37; the sequence is MVSLLSCGTSASSHIVKKALTRLSLAMAAGLCFNLAA.

This sequence belongs to the OpgD/OpgG family.

Its subcellular location is the periplasm. It participates in glycan metabolism; osmoregulated periplasmic glucan (OPG) biosynthesis. In terms of biological role, involved in the biosynthesis of osmoregulated periplasmic glucans (OPGs). The sequence is that of Glucans biosynthesis protein G from Shewanella frigidimarina (strain NCIMB 400).